Reading from the N-terminus, the 326-residue chain is Protein MICROTUBULE BINDING PROTEIN 2C (326 aa).

Polar residues-rich tracts occupy residues 1–15 and 34–46; these read MYEQ…QSDS and PHQS…SGNE. Disordered regions lie at residues 1–46 and 71–132; these read MYEQ…SGNE and ERSS…KALA. Positions 132 to 183 form a coiled coil; it reads AGAEKEEMSRLREQVNDLQTKLSEKEEVLKSMEMSKNQVNEIQEKLEATNRL.

It belongs to the microtubule binding protein 2C family. As to quaternary structure, interacts with STM. Expressed in seedlings, roots, flowers and developing ovules.

It is found in the cytoplasm. The protein localises to the cytoskeleton. Prevents homeodomain proteins (e.g. STM) association to plasmodesmata and, consequently, cell-to-cell transport. Binds to RNA. Alters STM RNA binding capacity. Regulates cytoskeleton (e.g. actin) organization that determinates cell shape. Regulates stomata patterning and drought tolerance. Involved in restricting tobamovirus (e.g. oilseed rape mosaic virus) infectivity, probably by interfering with cell-to-cell virus movement. This chain is Protein MICROTUBULE BINDING PROTEIN 2C, found in Arabidopsis thaliana (Mouse-ear cress).